Reading from the N-terminus, the 323-residue chain is Aquaporin-4 (323 aa).

Residues 1-36 (MSDGAAARRWGKCGPPCSRESIMVAFKGVWTQAFWK) are Cytoplasmic-facing. S-palmitoyl cysteine attachment occurs at residues Cys-13 and Cys-17. A helical membrane pass occupies residues 37–57 (AVTAEFLAMLIFVLLSVGSTI). Residues 58 to 69 (NWGGSENPLPVD) lie on the Extracellular side of the membrane. A helical transmembrane segment spans residues 70-89 (MVLISLCFGLSIATMVQCFG). Residues 90–93 (HISG) lie on the Cytoplasmic side of the membrane. The discontinuously helical intramembrane region spans 94–101 (GHINPAVT). Positions 97–99 (NPA) match the NPA 1 motif. Residues 102–115 (VAMVCTRKISIAKS) lie on the Cytoplasmic side of the membrane. Ser-111 is subject to Phosphoserine; by PKG. A helical transmembrane segment spans residues 116–136 (VFYITAQCLGAIIGAGILYLV). Over 137–155 (TPPSVVGGLGVTTVHGNLT) the chain is Extracellular. Residue Asn-153 is glycosylated (N-linked (GlcNAc...) asparagine). A helical transmembrane segment spans residues 156–176 (AGHGLLVELIITFQLVFTIFA). The Cytoplasmic portion of the chain corresponds to 177–184 (SCDSKRTD). Ser-180 is subject to Phosphoserine; by PKC. Residues 185-205 (VTGSVALAIGFSVAIGHLFAI) form a helical membrane-spanning segment. Over 206–208 (NYT) the chain is Extracellular. The segment at residues 209 to 222 (GASMNPARSFGPAV) is an intramembrane region (discontinuously helical). Residues 213 to 215 (NPA) carry the NPA 2 motif. Residues 223 to 231 (IMGNWENHW) are Extracellular-facing. Residues 232-252 (IYWVGPIIGAVLAGALYEYVF) form a helical membrane-spanning segment. Topologically, residues 253–323 (CPDVELKRRL…DSSGEVLSSV (71 aa)) are cytoplasmic. 2 positions are modified to phosphoserine: Ser-276 and Ser-285. Residue Thr-289 is modified to Phosphothreonine. A Phosphoserine modification is found at Ser-321.

The protein belongs to the MIP/aquaporin (TC 1.A.8) family. Homotetramer. The tetramers can form oligomeric arrays in membranes. The size of the oligomers differs between tissues and is smaller in skeletal muscle than in brain. Interaction between AQP4 oligomeric arrays in close-by cells can contribute to cell-cell adhesion. Part of a complex containing MLC1, TRPV4, HEPACAM and ATP1B1. Phosphorylation by PKC at Ser-180 promotes internalization from the cell membrane, reducing the conductance by 50%. Phosphorylation by PKG at Ser-111 in response to glutamate increases conductance by 40%. Post-translationally, isoform Long: Palmitoylated on its N-terminal region. Isoform 3: Not palmitoylated. As to expression, detected in cerebellum. Detected on pericapillary astrocyte endfeet in cerebellum, and in skeletal muscle. Detected in glial lamellae in the hypothalamus (at protein level). Abundant in mature brain cortex, cerebellum and spinal cord. Highly expressed in the ependymal cell lining the aqueductal system and over the space of the brain in contact with the subarachnoid space. Detected in paraventricular and supraoptic nuclei, the granule cell layer of the dentate gyrus and the Purkinje cell layer in the cerebellum. Only weakly detectable in eye, kidney, intestine, and lung.

The protein resides in the cell membrane. It localises to the basolateral cell membrane. Its subcellular location is the endosome membrane. The protein localises to the sarcolemma. It is found in the cell projection. It carries out the reaction H2O(in) = H2O(out). Forms a water-specific channel. Plays an important role in brain water homeostasis and in glymphatic solute transport. Required for a normal rate of water exchange across the blood brain interface. Required for normal levels of cerebrospinal fluid influx into the brain cortex and parenchyma along paravascular spaces that surround penetrating arteries, and for normal drainage of interstitial fluid along paravenous drainage pathways. Thereby, it is required for normal clearance of solutes from the brain interstitial fluid, including soluble beta-amyloid peptides derived from APP. Plays a redundant role in urinary water homeostasis and urinary concentrating ability. The chain is Aquaporin-4 (Aqp4) from Rattus norvegicus (Rat).